The following is a 375-amino-acid chain: Protein NDRG3 (375 aa).

A disordered region spans residues Arg326 to Cys375. Low complexity predominate over residues Ser348–Gln363. The segment covering Ile364–Cys375 has biased composition (polar residues).

The protein belongs to the NDRG family.

The polypeptide is Protein NDRG3 (Xenopus laevis (African clawed frog)).